The chain runs to 109 residues: Nucleoid-associated protein BU482 (109 aa).

The protein belongs to the YbaB/EbfC family. In terms of assembly, homodimer.

Its subcellular location is the cytoplasm. It is found in the nucleoid. In terms of biological role, binds to DNA and alters its conformation. May be involved in regulation of gene expression, nucleoid organization and DNA protection. The chain is Nucleoid-associated protein BU482 from Buchnera aphidicola subsp. Acyrthosiphon pisum (strain APS) (Acyrthosiphon pisum symbiotic bacterium).